A 278-amino-acid polypeptide reads, in one-letter code: Digeranylgeranylglyceryl phosphate synthase (278 aa).

Transmembrane regions (helical) follow at residues 12–32 (LKNCLTAGFGALISGLIASNF), 34–54 (FGALFPLILAFLVVFFICGFG), 92–112 (IMIFGLIISLFNIYCFLMAVL), 129–149 (IIGNMLVAYLTGSVFIFGGIA), 199–219 (IYISLGLLLIAIGLSFLPYLT), 221–241 (IFGIYYLLMILICNLMFLAGF), and 257–277 (SKNIKLITNFVLIAFIIGSIF).

The protein belongs to the UbiA prenyltransferase family. DGGGP synthase subfamily. It depends on Mg(2+) as a cofactor.

It is found in the cell membrane. It catalyses the reaction sn-3-O-(geranylgeranyl)glycerol 1-phosphate + (2E,6E,10E)-geranylgeranyl diphosphate = 2,3-bis-O-(geranylgeranyl)-sn-glycerol 1-phosphate + diphosphate. It participates in membrane lipid metabolism; glycerophospholipid metabolism. Its function is as follows. Prenyltransferase that catalyzes the transfer of the geranylgeranyl moiety of geranylgeranyl diphosphate (GGPP) to the C2 hydroxyl of (S)-3-O-geranylgeranylglyceryl phosphate (GGGP). This reaction is the second ether-bond-formation step in the biosynthesis of archaeal membrane lipids. The protein is Digeranylgeranylglyceryl phosphate synthase of Methanococcus vannielii (strain ATCC 35089 / DSM 1224 / JCM 13029 / OCM 148 / SB).